Reading from the N-terminus, the 200-residue chain is MLSASEGEQTVRLARNTIESFLKDGEQSDSIDLPEVFGELRGVFVTLTKNGNLRGCIGHPYADSVLESAIVDSAISAATRDPRFPMVDISEMSDIIVEVTVLTQPELVDVLPDKLPEVIEIGRHGLIAKMGMYQGLLLPQVAPENDFDAIDLLNHTCLKAGLPQDAWLTGAQMYWFEGQIFKEVEPRGDIEENKFNSCCK.

In terms of domain architecture, AMMECR1 spans 5–192; it reads SEGEQTVRLA…EVEPRGDIEE (188 aa).

This Methanococcoides burtonii (strain DSM 6242 / NBRC 107633 / OCM 468 / ACE-M) protein is Protein Mbur_1344.